Reading from the N-terminus, the 272-residue chain is 2,3,4,5-tetrahydropyridine-2,6-dicarboxylate N-succinyltransferase (272 aa).

Substrate-binding residues include Arg104 and Asp141.

The protein belongs to the transferase hexapeptide repeat family. Homotrimer.

It is found in the cytoplasm. It catalyses the reaction (S)-2,3,4,5-tetrahydrodipicolinate + succinyl-CoA + H2O = (S)-2-succinylamino-6-oxoheptanedioate + CoA. The protein operates within amino-acid biosynthesis; L-lysine biosynthesis via DAP pathway; LL-2,6-diaminopimelate from (S)-tetrahydrodipicolinate (succinylase route): step 1/3. The sequence is that of 2,3,4,5-tetrahydropyridine-2,6-dicarboxylate N-succinyltransferase from Alkalilimnicola ehrlichii (strain ATCC BAA-1101 / DSM 17681 / MLHE-1).